The primary structure comprises 3841 residues: Transformation/transcription domain-associated protein (3841 aa).

Disordered regions lie at residues 491–516 (TPTV…PPAT) and 2002–2027 (QQPE…MKRG). Residues 498-515 (ALPPPAPPTPVTPAPPPA) are compositionally biased toward pro residues. The Bipartite nuclear localization signal motif lies at 2025-2040 (KRGMSVDSAQDVKRFR). Residues 2671 to 3239 (VLKYLGKTHN…YFPIRTLYLT (569 aa)) enclose the FAT domain. Residues 3249-3271 (KSDSGQQQPSSAAAQTHSASDPG) form a disordered region. The segment covering 3251-3268 (DSGQQQPSSAAAQTHSAS) has biased composition (low complexity). Residues 3482-3805 (MPRVEIVQKH…AVTAIMTRLH (324 aa)) form the PI3K/PI4K catalytic domain. Positions 3488–3494 (VQKHNTA) are G-loop. The segment at 3669 to 3677 (HLNRLNPEM) is catalytic loop. The segment at 3689-3714 (VSYFRFDINDATGDLDANRPVPFRLT) is activation loop. The region spanning 3809–3841 (QFEGGESKVNTLVAAANSLDNLCRMDPAWHPWL) is the FATC domain.

This sequence belongs to the PI3/PI4-kinase family. TRA1 subfamily.

It localises to the nucleus. Functionally, adapter protein, which is found in various multiprotein chromatin complexes with histone acetyltransferase activity (HAT), which gives a specific tag for epigenetic transcription activation. May be required for the mitotic checkpoint and normal cell cycle progression. May play a role in the formation and maintenance of the auditory system. The protein is Transformation/transcription domain-associated protein of Danio rerio (Zebrafish).